Here is a 399-residue protein sequence, read N- to C-terminus: Ribonuclease T2-like 1-A (399 aa).

The N-terminal stretch at 1-17 is a signal peptide; sequence MLSILSIAALLIATVQA. Disulfide bonds link Cys-24/Cys-43, Cys-32/Cys-79, Cys-42/Cys-150, Cys-87/Cys-142, and Cys-214/Cys-249. Catalysis depends on residues His-72, Glu-135, and His-139. The interval 259–279 is disordered; sequence KGNSGANTLTTKTTGTTTSGS. Residues 262 to 279 are compositionally biased toward low complexity; the sequence is SGANTLTTKTTGTTTSGS. The N-linked (GlcNAc...) asparagine glycan is linked to Asn-291.

This sequence belongs to the RNase T2 family.

The protein localises to the vacuole lumen. It is found in the cytoplasm. The catalysed reaction is a ribonucleotidyl-ribonucleotide-RNA + H2O = a 3'-end 3'-phospho-ribonucleotide-RNA + a 5'-end dephospho-ribonucleoside-RNA + H(+). Its function is as follows. Rnase which modulates cell survival under stress conditions. Released from the vacuole to the cytoplasm during stress to promote tRNA and rRNA cleavage and to activate separately a downstream pathway that promotes cell death. Involved in cell size, vacuolar morphology and growth at high temperatures and high salt concentration. The sequence is that of Ribonuclease T2-like 1-A (RNY1-A) from Candida albicans (strain SC5314 / ATCC MYA-2876) (Yeast).